A 299-amino-acid polypeptide reads, in one-letter code: Lathosterol oxidase (299 aa).

Transmembrane regions (helical) follow at residues 32 to 52, 79 to 99, and 117 to 137; these read VSLLVVTNLGAYILYFFCATL, FTVKSLPWISIPTVSLFLLEL, and IHLIMSVISFLFFTDMLIYWI. Residues 124–252 form the Fatty acid hydroxylase domain; sequence ISFLFFTDML…YFTLWDRIGG (129 aa). Positions 138 to 143 match the Histidine box-1 motif; that stretch reads HRGLHH. A Histidine box-2 motif is present at residues 151 to 155; the sequence is HKPHH. The short motif at 228–233 is the Histidine box-3 element; the sequence is HHTDHH. S253 is subject to Phosphoserine.

It belongs to the sterol desaturase family. Fe cation serves as cofactor.

The protein localises to the endoplasmic reticulum membrane. It catalyses the reaction a Delta(7)-sterol + 2 Fe(II)-[cytochrome b5] + O2 + 2 H(+) = a Delta(5),Delta(7)-sterol + 2 Fe(III)-[cytochrome b5] + 2 H2O. It carries out the reaction lathosterol + 2 Fe(II)-[cytochrome b5] + O2 + 2 H(+) = 7-dehydrocholesterol + 2 Fe(III)-[cytochrome b5] + 2 H2O. The catalysed reaction is 5alpha-cholesta-7,24-dien-3beta-ol + 2 Fe(II)-[cytochrome b5] + O2 + 2 H(+) = 7-dehydrodesmosterol + 2 Fe(III)-[cytochrome b5] + 2 H2O. Its pathway is steroid biosynthesis; cholesterol biosynthesis. In terms of biological role, catalyzes the penultimate step of the biosynthesis of cholesterol, the dehydrogenation of lathosterol into 7-dehydrocholesterol (7-DHC). Cholesterol is the major sterol component in mammalian membranes and a precursor for bile acid and steroid hormone synthesis. In addition to its essential role in cholesterol biosynthesis, it also indirectly regulates ferroptosis through the production of 7-DHC. By diverting the spread of damage caused by peroxyl radicals from the phospholipid components to its sterol nucleus, 7-DHC prevents this form of cell death. This is Lathosterol oxidase from Rattus norvegicus (Rat).